A 204-amino-acid chain; its full sequence is CASP-like protein 2A1 (204 aa).

The segment covering 1-11 (MEKSNDHDKAS) has biased composition (basic and acidic residues). The interval 1-25 (MEKSNDHDKASHGGSGGGATEKWEE) is disordered. Topologically, residues 1–32 (MEKSNDHDKASHGGSGGGATEKWEETSPGIRT) are cytoplasmic. The helical transmembrane segment at 33-53 (AETMLRLAPVGLCVAALVVML) threads the bilayer. Residues 54–74 (KDSETNEFGSISYSNLTAFRY) are Extracellular-facing. Asparagine 68 carries N-linked (GlcNAc...) asparagine glycosylation. A helical membrane pass occupies residues 75-95 (LVHANGICAGYSLLSAAIAAM). Topologically, residues 96 to 113 (PRSSSTMPRVWTFFCLDQ) are cytoplasmic. Residues 114–134 (LLTYLVLAAGAVSAEVLYLAY) traverse the membrane as a helical segment. The Extracellular segment spans residues 135–155 (NGDSAITWSDACSSYGGFCHR). The chain crosses the membrane as a helical span at residues 156-176 (ATASVIITFFVVCFYILLSLI). The Cytoplasmic segment spans residues 177 to 204 (SSYKLFTRFDPPSIVDSDKTLEVAVFGS).

This sequence belongs to the Casparian strip membrane proteins (CASP) family. As to quaternary structure, homodimer and heterodimers.

The protein localises to the cell membrane. The sequence is that of CASP-like protein 2A1 from Arabidopsis lyrata subsp. lyrata (Lyre-leaved rock-cress).